Reading from the N-terminus, the 322-residue chain is Deoxycytidylate deaminase (322 aa).

Residues 173 to 311 (SWDSYFMEMA…SLLQAAGVQL (139 aa)) enclose the CMP/dCMP-type deaminase domain. Zn(2+) is bound at residue His-246. Glu-248 functions as the Proton donor in the catalytic mechanism. Residues Cys-273 and Cys-276 each contribute to the Zn(2+) site.

Belongs to the cytidine and deoxycytidylate deaminase family. It depends on Zn(2+) as a cofactor.

The protein resides in the cytoplasm. Its subcellular location is the nucleus. It carries out the reaction dCMP + H2O + H(+) = dUMP + NH4(+). In terms of biological role, supplies the nucleotide substrate for thymidylate synthetase. This is Deoxycytidylate deaminase from Schizosaccharomyces pombe (strain 972 / ATCC 24843) (Fission yeast).